A 353-amino-acid chain; its full sequence is Putative transcription factor MTF1 (353 aa).

2 stretches are compositionally biased toward polar residues: residues 11-26 (VTRS…TSPA) and 36-58 (EPSN…QQGN). 2 disordered regions span residues 11–96 (VTRS…ALPC) and 129–174 (FTTT…TTNP). Low complexity-rich tracts occupy residues 59 to 95 (TEAS…PALP) and 133 to 145 (NSSP…SPSS). Residues 148–164 (SHTRKNSKYTVRHHRTR) are compositionally biased toward basic residues. Positions 165–174 (QSSFNGTTNP) are enriched in polar residues.

It localises to the nucleus. Its function is as follows. May be involved in transcriptional activation. The polypeptide is Putative transcription factor MTF1 (MTF1) (Mucor circinelloides f. lusitanicus (Mucor racemosus var. lusitanicus)).